Here is a 456-residue protein sequence, read N- to C-terminus: Alcohol acyltransferase 16 (456 aa).

Catalysis depends on proton acceptor residues His-167 and Asp-382.

Belongs to the plant acyltransferase family. As to expression, expressed in fruit.

It catalyses the reaction 3-(methylsulfanyl)propanoyl-CoA + butan-1-ol = butyl 3-(methylsulfanyl)propanoate + CoA. The enzyme catalyses ethanol + benzoyl-CoA = ethyl benzoate + CoA. It carries out the reaction butan-1-ol + benzoyl-CoA = butyl benzoate + CoA. The catalysed reaction is 2-(methylsulfanyl)acetyl-CoA + butan-1-ol = butyl 2-(methylsulfanyl)acetate + CoA. Functionally, involved in the biosynthesis of volatile esters which confer kiwifruit flavor. Alcohol acyl transferase that can use a wide range of alcohols as substrate to produce esters. Exhibits benzoyl-CoA:alcohol O-acyltransferase activity. This chain is Alcohol acyltransferase 16, found in Actinidia chinensis var. chinensis (Chinese soft-hair kiwi).